The primary structure comprises 246 residues: ATP synthase subunit a (246 aa).

A propeptide spans methionine 1–tyrosine 3 (removed in mature form). A run of 7 helical transmembrane segments spans residues isoleucine 20–phenylalanine 40, tryptophan 56–glycine 76, phenylalanine 82–isoleucine 102, leucine 112–tyrosine 132, phenylalanine 138–isoleucine 158, alanine 176–methionine 196, and phenylalanine 203–isoleucine 223.

Belongs to the ATPase A chain family. In terms of assembly, F-type ATPases have 2 components, CF(1) - the catalytic core - and CF(0) - the membrane proton channel. CF(1) has five subunits: alpha(3), beta(3), gamma(1), delta(1), epsilon(1). CF(0) has three main subunits: a, b and c.

It is found in the mitochondrion inner membrane. In terms of biological role, mitochondrial membrane ATP synthase (F(1)F(0) ATP synthase or Complex V) produces ATP from ADP in the presence of a proton gradient across the membrane which is generated by electron transport complexes of the respiratory chain. F-type ATPases consist of two structural domains, F(1) - containing the extramembraneous catalytic core and F(0) - containing the membrane proton channel, linked together by a central stalk and a peripheral stalk. During catalysis, ATP synthesis in the catalytic domain of F(1) is coupled via a rotary mechanism of the central stalk subunits to proton translocation. Key component of the proton channel; it may play a direct role in the translocation of protons across the membrane. In Candida albicans (strain SC5314 / ATCC MYA-2876) (Yeast), this protein is ATP synthase subunit a (ATP6).